A 615-amino-acid chain; its full sequence is Protein translocase subunit SecD (615 aa).

Helical transmembrane passes span 10-30, 452-472, 477-497, 504-524, 546-568, and 585-605; these read YIML…NLYG, QGLE…IFFY, LIAT…MSLL, MPGI…NVLI, YAGA…IILY, and GVAT…NLLY.

It belongs to the SecD/SecF family. SecD subfamily. In terms of assembly, forms a complex with SecF. Part of the essential Sec protein translocation apparatus which comprises SecA, SecYEG and auxiliary proteins SecDF-YajC and YidC.

Its subcellular location is the cell inner membrane. Functionally, part of the Sec protein translocase complex. Interacts with the SecYEG preprotein conducting channel. SecDF uses the proton motive force (PMF) to complete protein translocation after the ATP-dependent function of SecA. In Salmonella choleraesuis (strain SC-B67), this protein is Protein translocase subunit SecD.